Here is a 202-residue protein sequence, read N- to C-terminus: Na(+)-translocating NADH-quinone reductase subunit E (202 aa).

The next 6 helical transmembrane spans lie at 11–31 (SIFL…FLAV), 39–59 (MGLG…NQLV), 79–99 (LSFL…QILE), 114–134 (GIFL…AFAV), 144–164 (IFYG…LAAV), and 180–200 (LGSV…FSGV).

The protein belongs to the NqrDE/RnfAE family. As to quaternary structure, composed of six subunits; NqrA, NqrB, NqrC, NqrD, NqrE and NqrF.

The protein resides in the cell inner membrane. The enzyme catalyses a ubiquinone + n Na(+)(in) + NADH + H(+) = a ubiquinol + n Na(+)(out) + NAD(+). Functionally, NQR complex catalyzes the reduction of ubiquinone-1 to ubiquinol by two successive reactions, coupled with the transport of Na(+) ions from the cytoplasm to the periplasm. NqrA to NqrE are probably involved in the second step, the conversion of ubisemiquinone to ubiquinol. The polypeptide is Na(+)-translocating NADH-quinone reductase subunit E (Pseudoalteromonas atlantica (strain T6c / ATCC BAA-1087)).